A 100-amino-acid polypeptide reads, in one-letter code: Large ribosomal subunit protein uL23 (100 aa).

This sequence belongs to the universal ribosomal protein uL23 family. Part of the 50S ribosomal subunit. Contacts protein L29, and trigger factor when it is bound to the ribosome.

One of the early assembly proteins it binds 23S rRNA. One of the proteins that surrounds the polypeptide exit tunnel on the outside of the ribosome. Forms the main docking site for trigger factor binding to the ribosome. This chain is Large ribosomal subunit protein uL23, found in Vibrio campbellii (strain ATCC BAA-1116).